The following is a 293-amino-acid chain: Fructokinase (293 aa).

Residue Thr-133 coordinates ATP. Zn(2+) contacts are provided by His-156, Cys-174, His-177, and Cys-180. ATP-binding positions include Pro-188 and 236 to 240; that span reads GVMAQ.

It belongs to the ROK (NagC/XylR) family. It depends on Mg(2+) as a cofactor.

The enzyme catalyses D-fructose + ATP = D-fructose 6-phosphate + ADP + H(+). With respect to regulation, inhibition by zinc ions. This chain is Fructokinase (scrK), found in Streptococcus mutans serotype c (strain ATCC 700610 / UA159).